A 308-amino-acid polypeptide reads, in one-letter code: 4-hydroxy-3-methylbut-2-enyl diphosphate reductase (308 aa).

C12 serves as a coordination point for [4Fe-4S] cluster. 2 residues coordinate (2E)-4-hydroxy-3-methylbut-2-enyl diphosphate: H43 and H77. H43 and H77 together coordinate dimethylallyl diphosphate. Residues H43 and H77 each coordinate isopentenyl diphosphate. A [4Fe-4S] cluster-binding site is contributed by C99. (2E)-4-hydroxy-3-methylbut-2-enyl diphosphate is bound at residue H127. Residue H127 participates in dimethylallyl diphosphate binding. H127 serves as a coordination point for isopentenyl diphosphate. The active-site Proton donor is E129. (2E)-4-hydroxy-3-methylbut-2-enyl diphosphate is bound at residue T167. C197 serves as a coordination point for [4Fe-4S] cluster. (2E)-4-hydroxy-3-methylbut-2-enyl diphosphate-binding residues include S225, S226, N227, and S269. Positions 225, 226, 227, and 269 each coordinate dimethylallyl diphosphate. Positions 225, 226, 227, and 269 each coordinate isopentenyl diphosphate.

It belongs to the IspH family. [4Fe-4S] cluster serves as cofactor.

The enzyme catalyses isopentenyl diphosphate + 2 oxidized [2Fe-2S]-[ferredoxin] + H2O = (2E)-4-hydroxy-3-methylbut-2-enyl diphosphate + 2 reduced [2Fe-2S]-[ferredoxin] + 2 H(+). It carries out the reaction dimethylallyl diphosphate + 2 oxidized [2Fe-2S]-[ferredoxin] + H2O = (2E)-4-hydroxy-3-methylbut-2-enyl diphosphate + 2 reduced [2Fe-2S]-[ferredoxin] + 2 H(+). Its pathway is isoprenoid biosynthesis; dimethylallyl diphosphate biosynthesis; dimethylallyl diphosphate from (2E)-4-hydroxy-3-methylbutenyl diphosphate: step 1/1. It functions in the pathway isoprenoid biosynthesis; isopentenyl diphosphate biosynthesis via DXP pathway; isopentenyl diphosphate from 1-deoxy-D-xylulose 5-phosphate: step 6/6. In terms of biological role, catalyzes the conversion of 1-hydroxy-2-methyl-2-(E)-butenyl 4-diphosphate (HMBPP) into a mixture of isopentenyl diphosphate (IPP) and dimethylallyl diphosphate (DMAPP). Acts in the terminal step of the DOXP/MEP pathway for isoprenoid precursor biosynthesis. The polypeptide is 4-hydroxy-3-methylbut-2-enyl diphosphate reductase (Wolbachia pipientis subsp. Culex pipiens (strain wPip)).